The sequence spans 483 residues: MNLKELLNNIEAKIYGKVSPIEVRNLTKDSRNVGFGDIFIANKGKQFDGNDFSPLAIENGAIAIASSIYNPFLSVVQIVSSNLPQLEAELSAKYYNYPSKKLCIVGVTGTNGKTTVSHLIKTLFDGCNKPSGLIGTIEHVLGNNRIQDGYTTPESCLLQKYLAEMVKNRLTSAVMEVSSVGLVLERLAEVDFDVGVLTNITLDHLDFHGSFEEYINAKLKLFSKLPATGLAVVNGDLSYASRFLEMTQAQPITYGIECPADYRAMHLRSSPFGTDFDLVYRGESLPCRLPLIGKHNVYNILAAIAVAHQHCNGDLQQLISLAANVESPRGRLEPVFSGPCPIYIDYAHTPDALENVCKTLHALLPEQGKLIVVFGCGGDRDQSKRQIMAEVVERYGFAVVTSDNPRGEDPEEIIKAICSGFVKRNFSIEIDRKQAITYALSIASDRDIVLVAGKGHETYQIFKHQTIAFDDKEIVREVLSSHV.

Residue Ser30 participates in UDP-N-acetyl-alpha-D-muramoyl-L-alanyl-D-glutamate binding. 109 to 115 (GTNGKTT) is an ATP binding site. Residues 151–152 (TT), Ser178, and Arg186 each bind UDP-N-acetyl-alpha-D-muramoyl-L-alanyl-D-glutamate. Position 218 is an N6-carboxylysine (Lys218). Meso-2,6-diaminopimelate-binding positions include Arg380, 403-406 (DNPR), Gly453, and Glu457. A Meso-diaminopimelate recognition motif motif is present at residues 403–406 (DNPR).

The protein belongs to the MurCDEF family. MurE subfamily. Requires Mg(2+) as cofactor. Carboxylation is probably crucial for Mg(2+) binding and, consequently, for the gamma-phosphate positioning of ATP.

It localises to the cytoplasm. The catalysed reaction is UDP-N-acetyl-alpha-D-muramoyl-L-alanyl-D-glutamate + meso-2,6-diaminopimelate + ATP = UDP-N-acetyl-alpha-D-muramoyl-L-alanyl-gamma-D-glutamyl-meso-2,6-diaminopimelate + ADP + phosphate + H(+). It functions in the pathway cell wall biogenesis; peptidoglycan biosynthesis. Catalyzes the addition of meso-diaminopimelic acid to the nucleotide precursor UDP-N-acetylmuramoyl-L-alanyl-D-glutamate (UMAG) in the biosynthesis of bacterial cell-wall peptidoglycan. This is UDP-N-acetylmuramoyl-L-alanyl-D-glutamate--2,6-diaminopimelate ligase from Chlamydia caviae (strain ATCC VR-813 / DSM 19441 / 03DC25 / GPIC) (Chlamydophila caviae).